The sequence spans 445 residues: Argininosuccinate synthase (445 aa).

ATP contacts are provided by residues 17-25 and Ala43; that span reads AFSGGLDTS. Tyr99 contacts L-citrulline. ATP is bound by residues Gly129 and Thr131. L-aspartate is bound by residues Thr131, Asn135, and Asp136. Asn135 serves as a coordination point for L-citrulline. Residue Asp136 coordinates ATP. Arg139 and Ser192 together coordinate L-citrulline. An ATP-binding site is contributed by Asp194. 3 residues coordinate L-citrulline: Thr201, Glu203, and Glu280.

The protein belongs to the argininosuccinate synthase family. Type 2 subfamily. In terms of assembly, homotetramer.

The protein resides in the cytoplasm. It carries out the reaction L-citrulline + L-aspartate + ATP = 2-(N(omega)-L-arginino)succinate + AMP + diphosphate + H(+). It participates in amino-acid biosynthesis; L-arginine biosynthesis; L-arginine from L-ornithine and carbamoyl phosphate: step 2/3. This chain is Argininosuccinate synthase, found in Herminiimonas arsenicoxydans.